The sequence spans 333 residues: Beta-ketoacyl-[acyl-carrier-protein] synthase III (333 aa).

Residues Cys-116 and His-258 contribute to the active site. The segment at 259–263 (QANKR) is ACP-binding. Residue Asn-288 is part of the active site.

Belongs to the thiolase-like superfamily. FabH family. In terms of assembly, homodimer.

The protein resides in the cytoplasm. The catalysed reaction is malonyl-[ACP] + acetyl-CoA + H(+) = 3-oxobutanoyl-[ACP] + CO2 + CoA. Its pathway is lipid metabolism; fatty acid biosynthesis. In terms of biological role, catalyzes the condensation reaction of fatty acid synthesis by the addition to an acyl acceptor of two carbons from malonyl-ACP. Catalyzes the first condensation reaction which initiates fatty acid synthesis and may therefore play a role in governing the total rate of fatty acid production. Possesses both acetoacetyl-ACP synthase and acetyl transacylase activities. Its substrate specificity determines the biosynthesis of branched-chain and/or straight-chain of fatty acids. In Koribacter versatilis (strain Ellin345), this protein is Beta-ketoacyl-[acyl-carrier-protein] synthase III.